Here is a 345-residue protein sequence, read N- to C-terminus: Fructose-bisphosphate aldolase, plasmid (345 aa).

Ser50 is a binding site for D-glyceraldehyde 3-phosphate. Asp83 serves as the catalytic Proton donor. Zn(2+) is bound by residues His84, Asp105, Glu142, and His198. Gly199 contributes to the dihydroxyacetone phosphate binding site. A Zn(2+)-binding site is contributed by His232. Residues Gly233 to Ser235 and Asn275 to Thr278 each bind dihydroxyacetone phosphate.

This sequence belongs to the class II fructose-bisphosphate aldolase family. In terms of assembly, homodimer. Zn(2+) is required as a cofactor.

The catalysed reaction is beta-D-fructose 1,6-bisphosphate = D-glyceraldehyde 3-phosphate + dihydroxyacetone phosphate. The protein operates within carbohydrate biosynthesis; Calvin cycle. It participates in carbohydrate degradation; glycolysis; D-glyceraldehyde 3-phosphate and glycerone phosphate from D-glucose: step 4/4. Functionally, catalyzes the aldol condensation of dihydroxyacetone phosphate (DHAP or glycerone-phosphate) with glyceraldehyde 3-phosphate (G3P) to form fructose 1,6-bisphosphate (FBP) in gluconeogenesis and the reverse reaction in glycolysis. The sequence is that of Fructose-bisphosphate aldolase, plasmid (cbbAP) from Cupriavidus necator (strain ATCC 17699 / DSM 428 / KCTC 22496 / NCIMB 10442 / H16 / Stanier 337) (Ralstonia eutropha).